The primary structure comprises 277 residues: Indole-3-glycerol phosphate synthase (277 aa).

The protein belongs to the TrpC family.

The catalysed reaction is 1-(2-carboxyphenylamino)-1-deoxy-D-ribulose 5-phosphate + H(+) = (1S,2R)-1-C-(indol-3-yl)glycerol 3-phosphate + CO2 + H2O. Its pathway is amino-acid biosynthesis; L-tryptophan biosynthesis; L-tryptophan from chorismate: step 4/5. This Pseudomonas putida (strain ATCC 700007 / DSM 6899 / JCM 31910 / BCRC 17059 / LMG 24140 / F1) protein is Indole-3-glycerol phosphate synthase.